A 230-amino-acid chain; its full sequence is Ubiquitin carboxyl-terminal hydrolase isozyme L3 (230 aa).

In terms of domain architecture, UCH catalytic spans 5-229 (RWLPLEANPE…LRFNAIALSA (225 aa)). The segment at 8–13 (PLEANP) is interaction with ubiquitin. Cys-95 functions as the Nucleophile in the catalytic mechanism. Ser-130 bears the Phosphoserine mark. The interval 152–159 (AHEGQTEA) is interaction with ubiquitin. Crossover loop which restricts access of large ubiquitin adducts to the active site. His-169 serves as the catalytic Proton donor. The interaction with ubiquitin stretch occupies residues 219–224 (ELRFNA).

The protein belongs to the peptidase C12 family. Preferentially binds diubiquitin; the interaction does not hydrolyze diubiquitin but, in vitro, inhibits the hydrolyzing activity on other substrates. As to expression, highly expressed in heart, skeletal muscle, and testis.

The protein resides in the cytoplasm. It catalyses the reaction Thiol-dependent hydrolysis of ester, thioester, amide, peptide and isopeptide bonds formed by the C-terminal Gly of ubiquitin (a 76-residue protein attached to proteins as an intracellular targeting signal).. Inhibited by monoubiquitin and diubiquitin. Deubiquitinating enzyme (DUB) that controls levels of cellular ubiquitin through processing of ubiquitin precursors and ubiquitinated proteins. Thiol protease that recognizes and hydrolyzes a peptide bond at the C-terminal glycine of either ubiquitin or NEDD8. Has a 10-fold preference for Arg and Lys at position P3'', and exhibits a preference towards 'Lys-48'-linked ubiquitin chains. Deubiquitinates ENAC in apical compartments, thereby regulating apical membrane recycling. Indirectly increases the phosphorylation of IGFIR, AKT and FOXO1 and promotes insulin-signaling and insulin-induced adipogenesis. Required for stress-response retinal, skeletal muscle and germ cell maintenance. May be involved in working memory. Can hydrolyze UBB(+1), a mutated form of ubiquitin which is not effectively degraded by the proteasome and is associated with neurogenerative disorders. In Homo sapiens (Human), this protein is Ubiquitin carboxyl-terminal hydrolase isozyme L3 (UCHL3).